We begin with the raw amino-acid sequence, 162 residues long: L-amino acid N-acetyltransferase AaaT (162 aa).

One can recognise an N-acetyltransferase domain in the interval 4–162 (IVIRHAETRD…VDAYYMARVK (159 aa)).

This sequence belongs to the acetyltransferase family.

It catalyses the reaction L-phenylalanine + acetyl-CoA = N-acetyl-L-phenylalanine + CoA + H(+). It carries out the reaction L-methionine + acetyl-CoA = N-acetyl-L-methionine + CoA + H(+). In terms of biological role, catalyzes the N-acetylation of L-phenylalanine and L-methionine using acetyl-CoA as acetyl donor in vitro. Cannot accept L-tyrosine as substrate and propionyl-CoA, succinyl-CoA or (S)-methylmalonyl-CoA as acyl donors. Is also able to acetylate and thus detoxify several nonhydrolyzable aminoacyl adenylates, but not the processed form of the peptide-nucleotide antibiotic microcin C (McC). When overproduced, provides complete resistance to leucyl sulfamoyl adenylate (LSA) and partial resistance to alanyl sulfamoyl adenylate (ASA) and phenylalanyl sulfamoyl adenylate (FSA). Therefore, may protect bacteria from various toxic aminoacyl nucleotides, either exogenous or those generated inside the cell during normal metabolism. The polypeptide is L-amino acid N-acetyltransferase AaaT (Escherichia coli (strain K12)).